Consider the following 365-residue polypeptide: Outer capsid protein sigma-3 (365 aa).

The CCHC-type zinc-finger motif lies at 51-73; the sequence is CMHCLGVVGSLQRKLKHLPHHRC.

It belongs to the orthoreovirus sigma-3 protein family. In terms of assembly, heterohexamer of three sigma-3 and three Mu-1 proteins. The RNA-binding form is probably a homodimer. Post-translationally, cleaved during virus the endosomal proteolytic disassembly of the outer capsid.

It localises to the virion. In terms of biological role, stimulates translation by blocking the activation of the dsRNA-dependent protein kinase EIF2AK2/PKR, thereby inhibiting the host interferon response. Sigma3 prevents the activation of EIF2AK2 by competing with the kinase for dsRNA-binding. The viral outer shell polypeptides, of which sigma-3 is one, impose structural constraints that prevent elongation of nascent transcripts by the RNA-dependent RNA polymerase lambda-3. The polypeptide is Outer capsid protein sigma-3 (S4) (Mammalia (T1L)).